Here is a 636-residue protein sequence, read N- to C-terminus: MVICHSCTTFCILLVIDLVPCRIVGMENVENRVMFSLLDRSPQTNDTGPKPEKFEIAKGKFKVLEENSIGADTVSHLPTTREEHVSAVVPMPNFDPHRLEKALRTKGSIDGTEEALYRSLLDHTVYEKDVRPCIHHSQPTNVTFGFLLNQIVEMDERNQALTTRSWLNINWMDPRLSWNESLWSDIKAIYIPHARIWKPDIILVNNAIREYYASLVSTDVMVTSDGNVTWLFSALFRSSCPIRVRYYPFDDQQCDLKFASWSHDITEINLGLNTDKGDLSSYMNNSEFDLVDMTAVREVVRFPSDTNSDWPTIVIRIHMHRRPLFYVFNHIVPCVLISSMAVLGFLMPPETGEKINMIITTLLSMGVYLQSITESIPPTSEGVPLIGMYYVSSLLMVCLATCVNVITLNMHRNGAANQGRHVPAWMQKWILGYLATFMRMSIREPDSIALLKASQSKKSTIRRSSILRDLKRVKNMSNVRAKSKEQNANRECECMDPLVHIYAESIMTSLVSDPKPMNGSTIREDFASESTFLGRVVSDGIMPRISASSNSVLTEFETRFRRILKRVYRSLQQHEIREEILDERSRIQWQWQQLASVVDRLLLCLFCTATLFTIICLLIVPVVYRDNDVLSILNFF.

The first 25 residues, 1–25, serve as a signal peptide directing secretion; that stretch reads MVICHSCTTFCILLVIDLVPCRIVG. Over 26-326 the chain is Extracellular; it reads MENVENRVMF…IHMHRRPLFY (301 aa). N-linked (GlcNAc...) asparagine glycans are attached at residues N45, N141, N179, and N227. Residues C240 and C254 are joined by a disulfide bond. N284 carries an N-linked (GlcNAc...) asparagine glycan. The next 3 helical transmembrane spans lie at 327–347, 357–377, and 383–403; these read VFNH…GFLM, MIIT…ESIP, and VPLI…ATCV. Residues 404–602 lie on the Cytoplasmic side of the membrane; the sequence is NVITLNMHRN…QLASVVDRLL (199 aa). Residues 603 to 623 form a helical membrane-spanning segment; the sequence is LCLFCTATLFTIICLLIVPVV.

It belongs to the ligand-gated ion channel (TC 1.A.9) family.

Its subcellular location is the postsynaptic cell membrane. It is found in the cell membrane. In terms of biological role, acetylcholine receptor. This Caenorhabditis briggsae protein is Ligand-gated ion channel 4.